The chain runs to 232 residues: Large ribosomal subunit protein uL1 (232 aa).

The protein belongs to the universal ribosomal protein uL1 family. As to quaternary structure, part of the 50S ribosomal subunit.

Binds directly to 23S rRNA. The L1 stalk is quite mobile in the ribosome, and is involved in E site tRNA release. Functionally, protein L1 is also a translational repressor protein, it controls the translation of the L11 operon by binding to its mRNA. The sequence is that of Large ribosomal subunit protein uL1 from Alkaliphilus oremlandii (strain OhILAs) (Clostridium oremlandii (strain OhILAs)).